A 337-amino-acid chain; its full sequence is MSFFGFGPAAELDIALTDGESRRRVEHKTEDGKKEKYFLFYDGETVSGRVTVNLRNPGKRLEHQGLKIEFIGQIELYYDRGNHHEFVSLVKDLARPGEISQSQSFDFEFTHVEKPYESYTGQNVKLRYFLRATLSRRLNDVVKEMDIVVHTLSTYPELNSSIKMEVGIEDCLHIEFEYNKSKYHLKDVIVGKIYFLLVRIKIKHMEIDIIKRETTGTGPNVYHENDTIAKYEIMDGAPVRGESIPIRLFLAGYELTPTMRDINKKFSVRYYLNLVLIDEEERRYFKQQEVVLWRKGDIVRKSMSHQAAIASQRFEGTSHPETRPQHSGAAAVEQEQE.

The disordered stretch occupies residues 311–337; sequence SQRFEGTSHPETRPQHSGAAAVEQEQE.

The protein belongs to the VPS26 family. As to quaternary structure, component of the heterotrimeric retromer cargo-selective complex (CSC) which is believed to associate with variable sorting nexins to form functionally distinct retromer complex variants.

The protein resides in the cytoplasm. Its subcellular location is the membrane. It is found in the endosome. Functionally, acts as a component of the retromer cargo-selective complex (CSC). The CSC is believed to be the core functional component of retromer or respective retromer complex variants acting to prevent missorting of selected transmembrane cargo proteins into the lysosomal degradation pathway. Retromer mediates retrograde transport of cargo proteins from endosomes to the trans-Golgi network (TGN). This Xenopus tropicalis (Western clawed frog) protein is Vacuolar protein sorting-associated protein 26B (vps26b).